Consider the following 544-residue polypeptide: Chaperonin GroEL (544 aa).

ATP-binding positions include 29–32 (TLGP), Lys-50, 86–90 (DGTTT), Gly-414, and Asp-495.

It belongs to the chaperonin (HSP60) family. In terms of assembly, forms a cylinder of 14 subunits composed of two heptameric rings stacked back-to-back. Interacts with the co-chaperonin GroES.

Its subcellular location is the cytoplasm. The enzyme catalyses ATP + H2O + a folded polypeptide = ADP + phosphate + an unfolded polypeptide.. Functionally, together with its co-chaperonin GroES, plays an essential role in assisting protein folding. The GroEL-GroES system forms a nano-cage that allows encapsulation of the non-native substrate proteins and provides a physical environment optimized to promote and accelerate protein folding. The chain is Chaperonin GroEL from Treponema pallidum subsp. pallidum (strain SS14).